Consider the following 729-residue polypeptide: Catalase-peroxidase (729 aa).

The segment at residues 95-217 is a cross-link (tryptophyl-tyrosyl-methioninium (Trp-Tyr) (with M-243)); it reads WHSAGTYRIT…LAAVQMGLIY (123 aa). His-96 serves as the catalytic Proton acceptor. The tryptophyl-tyrosyl-methioninium (Tyr-Met) (with W-95) cross-link spans 217-243; the sequence is YVNPEGPNGKPDPIAAATDIRETFFRM. Heme b is bound at residue His-258.

This sequence belongs to the peroxidase family. Peroxidase/catalase subfamily. In terms of assembly, homodimer or homotetramer. Heme b serves as cofactor. Post-translationally, formation of the three residue Trp-Tyr-Met cross-link is important for the catalase, but not the peroxidase activity of the enzyme.

It catalyses the reaction H2O2 + AH2 = A + 2 H2O. The enzyme catalyses 2 H2O2 = O2 + 2 H2O. Its function is as follows. Bifunctional enzyme with both catalase and broad-spectrum peroxidase activity. The polypeptide is Catalase-peroxidase (Nitrobacter hamburgensis (strain DSM 10229 / NCIMB 13809 / X14)).